We begin with the raw amino-acid sequence, 389 residues long: Terminal nucleotidyltransferase 5D (389 aa).

The protein belongs to the TENT family. Restricted to testis.

It catalyses the reaction RNA(n) + ATP = RNA(n)-3'-adenine ribonucleotide + diphosphate. Catalyzes the transfer of one adenosine molecule from an ATP to an mRNA poly(A) tail bearing a 3'-OH terminal group. The polypeptide is Terminal nucleotidyltransferase 5D (Homo sapiens (Human)).